Consider the following 674-residue polypeptide: Probable 3',5'-cyclic-AMP phosphodiesterase pde-4 (674 aa).

Residues 1–82 are disordered; the sequence is MPRRRGSSSS…TSSASSYHPP (82 aa). The segment covering 15–24 has biased composition (gly residues); the sequence is GGSGGGGGFG. The span at 39–62 shows a compositional bias: low complexity; the sequence is RTSSPSASSTSRTPPAALPPRTSA. The span at 66–78 shows a compositional bias: polar residues; it reads PGSNHKLTSSASS. The region spanning 328–660 is the PDEase domain; the sequence is HVPEYGVNCA…EWYQSRIPEE (333 aa). The Proton donor role is filled by H407. H411, H447, D448, and D565 together coordinate a divalent metal cation.

Belongs to the cyclic nucleotide phosphodiesterase family. It depends on a divalent metal cation as a cofactor. As to expression, expressed in dorsal D (DD) motor neurons and several other neurons at the L1 stage. Expression in DD neurons decreases gradually beginning in the late L1 stage. Highly expressed in adult ventral D (VD) motor neurons, but diminished in adult DD motor neurons.

It carries out the reaction 3',5'-cyclic AMP + H2O = AMP + H(+). Its function is as follows. Hydrolyzes the second messenger 3',5'-cyclic AMP (cAMP), which is a key regulator of many important physiological processes. Antagonizes dorsal D (DD) motor neuron respecification by reducing levels of cAMP. The protein is Probable 3',5'-cyclic-AMP phosphodiesterase pde-4 (pde-4) of Caenorhabditis elegans.